We begin with the raw amino-acid sequence, 821 residues long: uncharacterized protein (821 aa).

Disordered regions lie at residues 1–20 (MGQTNSRHSLIETDEPTTSS), 55–96 (SENY…EAYS), 134–205 (SYDF…NNEH), 240–263 (RLHQSPSPIPNSNDNDSQTRRSSW), 274–293 (PEEFPNASNPEAHSNFTPLN), 360–381 (NVLQNSSQNGNDQISSDPESNS), 430–450 (TSEDHAPTMTQENQSLHNESR), 467–497 (EFSTDLPPTFERSNSTFSHPEPTRSDFSQAF), 512–535 (RNLFPTSNSGNQSTSSFSRYNQPT), and 549–641 (AQEP…SNQT). Polar residues-rich tracts occupy residues 58 to 88 (YADTPSRNTPNSSNGFPSETLVTSSAHCSTQ) and 185 to 203 (SLPSNSNSTYTTPLQSINN). Residues 279–293 (NASNPEAHSNFTPLN) are compositionally biased toward polar residues. Positions 437-450 (TMTQENQSLHNESR) are enriched in polar residues. Low complexity-rich tracts occupy residues 517-529 (TSNSGNQSTSSFS) and 568-578 (SSLLDSSNSNS). A compositionally biased stretch (polar residues) spans 579–622 (QRPFSTVPSESNVFSRNASGNFSMSQTHQPTTDNTSSFSTQPGR). The RING-type; atypical zinc finger occupies 766 to 809 (CLICLETYTNGDICRKLQACKHFFHQACIDQWLTTGNNSCPLCR).

This is an uncharacterized protein from Schizosaccharomyces pombe (strain 972 / ATCC 24843) (Fission yeast).